Reading from the N-terminus, the 334-residue chain is Amino acid--[acyl-carrier-protein] ligase 2 (334 aa).

A Zn(2+)-binding site is contributed by cysteine 131. Residues arginine 159, glutamate 161, and 168 to 169 (RL) contribute to the ATP site. Residue glutamate 176 coordinates Zn(2+). An an L-alpha-amino acid-binding site is contributed by glutamate 176. ATP-binding positions include lysine 235 and 250–253 (ACMS). Cysteine 279 serves as a coordination point for Zn(2+). Arginine 286 lines the ATP pocket.

It belongs to the class-II aminoacyl-tRNA synthetase family. Amino acid--[acyl-carrier-protein] ligase subfamily. In terms of assembly, homodimer. Requires Zn(2+) as cofactor.

The enzyme catalyses an L-alpha-amino acid + holo-[ACP] + ATP = an L-alpha-aminoacyl-[ACP] + AMP + diphosphate. Catalyzes the ATP-dependent activation of L-glycine and its transfer to the phosphopantetheine prosthetic group covalently attached to the vicinal carrier protein blr6284 of yet unknown function. May participate in nonribosomal peptide synthesis or related processes. L-alanine is a poor substrate whereas L-serine or D-amino acids are not substrates for ATP-dependent activation. Does not display tRNA aminoacylation activity. This is Amino acid--[acyl-carrier-protein] ligase 2 from Bradyrhizobium diazoefficiens (strain JCM 10833 / BCRC 13528 / IAM 13628 / NBRC 14792 / USDA 110).